We begin with the raw amino-acid sequence, 325 residues long: G-protein coupled receptor E6 (325 aa).

Helical transmembrane passes span 45–65 (LFGT…MGFF), 71–91 (FTPS…LWLM), 106–126 (IVTE…NVGM), 145–165 (PAAI…VIAV), 198–218 (LVAK…GTAL), 233–253 (AICV…LTAM), and 274–294 (VFIY…MFTG).

This sequence belongs to the G-protein coupled receptor 1 family.

Its subcellular location is the host membrane. In Equus caballus (Horse), this protein is G-protein coupled receptor E6 (E6).